A 217-amino-acid chain; its full sequence is tRNA (guanine-N(7)-)-methyltransferase (217 aa).

S-adenosyl-L-methionine is bound by residues Glu48, Glu73, Asn100, and Asp123. Asp123 is an active-site residue. The substrate site is built by Lys127 and Asp159.

Belongs to the class I-like SAM-binding methyltransferase superfamily. TrmB family.

The enzyme catalyses guanosine(46) in tRNA + S-adenosyl-L-methionine = N(7)-methylguanosine(46) in tRNA + S-adenosyl-L-homocysteine. It functions in the pathway tRNA modification; N(7)-methylguanine-tRNA biosynthesis. Catalyzes the formation of N(7)-methylguanine at position 46 (m7G46) in tRNA. This chain is tRNA (guanine-N(7)-)-methyltransferase, found in Leptospira interrogans serogroup Icterohaemorrhagiae serovar Lai (strain 56601).